The primary structure comprises 118 residues: DNA-directed RNA polymerase subunit omega (118 aa).

The interval 78–104 (DEPEEDSMAMLMGGGQPDKPAEDDMSE) is disordered.

Belongs to the RNA polymerase subunit omega family. As to quaternary structure, the RNAP catalytic core consists of 2 alpha, 1 beta, 1 beta' and 1 omega subunit. When a sigma factor is associated with the core the holoenzyme is formed, which can initiate transcription.

The catalysed reaction is RNA(n) + a ribonucleoside 5'-triphosphate = RNA(n+1) + diphosphate. Promotes RNA polymerase assembly. Latches the N- and C-terminal regions of the beta' subunit thereby facilitating its interaction with the beta and alpha subunits. The polypeptide is DNA-directed RNA polymerase subunit omega (Dinoroseobacter shibae (strain DSM 16493 / NCIMB 14021 / DFL 12)).